Reading from the N-terminus, the 155-residue chain is Endoribonuclease YbeY (155 aa).

Positions 117, 121, and 127 each coordinate Zn(2+).

This sequence belongs to the endoribonuclease YbeY family. The cofactor is Zn(2+).

The protein localises to the cytoplasm. Its function is as follows. Single strand-specific metallo-endoribonuclease involved in late-stage 70S ribosome quality control and in maturation of the 3' terminus of the 16S rRNA. In Treponema denticola (strain ATCC 35405 / DSM 14222 / CIP 103919 / JCM 8153 / KCTC 15104), this protein is Endoribonuclease YbeY.